The primary structure comprises 322 residues: Interferon regulatory factor 1 (322 aa).

The segment at residues 5–113 is a DNA-binding region (IRF tryptophan pentad repeat); it reads RMRMRPWLEM…SAVRVYRMLP (109 aa). At Lys78 the chain carries N6-acetyllysine. The interval 92 to 164 is disordered; it reads EEVKDQSRNK…STLPDDHSNY (73 aa). A compositionally biased stretch (polar residues) spans 146–157; it reads DTFSDGLSSSTL. Glycyl lysine isopeptide (Lys-Gly) (interchain with G-Cter in SUMO) cross-links involve residues Lys276 and Lys296.

Belongs to the IRF family. In terms of assembly, monomer. Homodimer. Interacts with EP300. Interacts with MYD88. Interacts with PIAS3. Interacts with SPOP. In terms of processing, phosphorylated by CK2 and this positively regulates its activity. Sumoylation represses the transcriptional activity and displays enhanced resistance to protein degradation. Sumoylated by UBE2I/UBC9 and SUMO1. Inactivates the tumor suppressor activity. Elevated levels in tumor cells. Major site is Lys-276. Sumoylation is enhanced by PIAS3. Desumoylated by SENP1 in tumor cells and appears to compete with ubiquitination on C-terminal sites. Post-translationally, ubiquitinated in a SPOP-depedent manner. Appears to compete with sumoylation on C-terminal sites.

It localises to the nucleus. Its subcellular location is the cytoplasm. Activated by MYD88. In terms of biological role, transcriptional regulator which displays a remarkable functional diversity in the regulation of cellular responses. Regulates transcription of IFN and IFN-inducible genes, host response to viral and bacterial infections, regulation of many genes expressed during hematopoiesis, inflammation, immune responses and cell proliferation and differentiation, regulation of the cell cycle and induction of growth arrest and programmed cell death following DNA damage. Stimulates both innate and acquired immune responses through the activation of specific target genes and can act as a transcriptional activator and repressor regulating target genes by binding to an interferon-stimulated response element (ISRE) in their promoters. Has an essentail role in IFNG-dependent immunity to mycobacteria. Binds to a consensus sequence in gene promoters. Its target genes for transcriptional activation activity include: genes involved in anti-viral response, such as IFN-alpha/beta, RIGI, TNFSF10/TRAIL, ZBP1, OAS1/2, PIAS1/GBP, EIF2AK2/PKR and RSAD2/viperin; antibacterial response, such as GBP2, GBP5 and NOS2/INOS; anti-proliferative response, such as p53/TP53, LOX and CDKN1A; apoptosis, such as BBC3/PUMA, CASP1, CASP7 and CASP8; immune response, such as IL7, IL12A/B and IL15, PTGS2/COX2 and CYBB; DNA damage responses and DNA repair, such as POLQ/POLH; MHC class I expression, such as TAP1, PSMB9/LMP2, PSME1/PA28A, PSME2/PA28B and B2M and MHC class II expression, such as CIITA; metabolic enzymes, such as ACOD1/IRG1. Represses genes involved in anti-proliferative response, such as BIRC5/survivin, CCNB1, CCNE1, CDK1, CDK2 and CDK4 and in immune response, such as FOXP3, IL4, ANXA2 and TLR4. Stimulates p53/TP53-dependent transcription through enhanced recruitment of EP300 leading to increased acetylation of p53/TP53. Plays an important role in immune response directly affecting NK maturation and activity, macrophage production of IL12, Th1 development and maturation of CD8+ T-cells. Also implicated in the differentiation and maturation of dendritic cells and in the suppression of regulatory T (Treg) cells development. Acts as a tumor suppressor and plays a role not only in antagonism of tumor cell growth but also in stimulating an immune response against tumor cells. This is Interferon regulatory factor 1 (IRF1) from Bos taurus (Bovine).